The primary structure comprises 1153 residues: Bifunctional dioxygenase (DOX)-epoxy alcohol synthase (EAS) (1153 aa).

Residues 46-56 are compositionally biased toward low complexity; it reads SSKESPSRKSS. The interval 46–113 is disordered; the sequence is SSKESPSRKS…TQHGDGTYPT (68 aa). The segment covering 57–74 has biased composition (polar residues); it reads TIGQSTRNGSCQADTQKG. A compositionally biased stretch (basic and acidic residues) spans 81-98; that stretch reads EKPKPVKENPMKKLKEMS. The segment at 177 to 525 is fatty acid alpha-dioxygenase; the sequence is TDSLINELWE…DGKFDDDDLV (349 aa). Residue His276 coordinates heme b. Residue Tyr454 is part of the active site. A heme b-binding site is contributed by His457. Positions 732–1153 are epoxy alcohol synthase; sequence RVNITSYGGA…VTMRVMWDDE (422 aa). Cys1086 serves as a coordination point for heme.

It in the N-terminal section; belongs to the peroxidase family. This sequence in the C-terminal section; belongs to the cytochrome P450 family. In terms of assembly, homotetramer. Requires heme b as cofactor. It depends on heme as a cofactor.

It carries out the reaction (9Z)-octadecenoate + O2 = (8R)-hydroperoxy-(9Z)-octadecenoate. It catalyses the reaction (9Z)-octadecenoate + O2 = 10-hydroperoxy-(8E)-octadecenoate. The enzyme catalyses (9Z,12Z)-octadecadienoate + O2 = (8E,10R,12Z)-10-hydroperoxyoctadeca-8,12-dienoate. The catalysed reaction is (9Z,12Z,15Z)-octadecatrienoate + O2 = (10R)-hydroperoxy-(8E,12Z,15Z)-octadecatrienoate. It carries out the reaction (9Z,12Z,15Z)-octadecatrienoate + O2 = (8R)-hydroperoxy-(9Z,12Z,15Z)-octadecatrienoate. It catalyses the reaction (11Z,14Z)-eicosadienoate + O2 = 12-hydroperoxy-(10E,14Z)-eicosadienoate. The enzyme catalyses (11Z,14Z,17Z)-eicosatrienoate + O2 = 12-hydroperoxy-(10E,14Z,17Z)-eicosatrienoate. The catalysed reaction is (12R,13S)-epoxy-(9Z)-octadecenoate + O2 = (12R,13S)-epoxy-(10R)-hydroperoxy-(8E)-octadecenoate. It carries out the reaction (8E,10R,12Z)-10-hydroperoxyoctadeca-8,12-dienoate = (12S,13R)-epoxy-(10R)-hydroxy-(8E)-octadecenoate. It catalyses the reaction (10R)-hydroperoxy-(8E,12Z,15Z)-octadecatrienoate = 12,13-epoxy-(10R)-hydroxy-(8E,15Z)-octadecadienoate. The enzyme catalyses 12-hydroperoxy-(10E,14Z)-eicosadienoate = 10,11-epoxy-12-hydroxy-(14Z)-eicosenoate. The catalysed reaction is 12-hydroperoxy-(10E,14Z,17Z)-eicosatrienoate = 14,15-epoxy-12-hydroxy-(10E,17Z)-eicosadienoate. It carries out the reaction (13R)-hydroperoxy-(9Z,11E)-octadecadienoate = (12R,13R)-epoxy-(11S)-hydroxy-(9Z)-octadecenoate. It catalyses the reaction (13S)-hydroperoxy-(9Z,11E)-octadecadienoate = (12R,13R)-epoxy-(11S)-hydroxy-(9Z)-octadecenoate. The enzyme catalyses 12-hydroperoxy-(10E,14Z)-eicosadienoate = 14,15-epoxy-12-hydroxy-(10E)-eicosenoate. The catalysed reaction is 12-hydroperoxy-(10E,14Z,17Z)-eicosatrienoate = 10,11-epoxy-12-hydroxy-(14Z,17Z)-eicosadienoate. Functionally, bifunctional dioxygenase (DOX)-epoxy alcohol synthase (EAS) that converts linoleic acid (18:2n-6) sequentially to 10(R)-hydroperoxy-8(E),12(Z)-octadecadienoic acid (10R-HPODE) and 10R-HPODE further to 12 S(13R)-epoxy-10(R)-hydroxy-8(E)-octadecenoic acid as the end product. Oxygenation at C-10 occurs by retention of the pro-R hydrogen of C-8 of 18:2n-6, suggesting antarafacial hydrogen abstraction and oxygenation. The epoxy alcohol is formed from 10R-HPODE, likely by heterolytic cleavage of the dioxygen bond and subsequent intramolecular epoxidation of the 12(Z) double bond. The DOX domain is also able to oxygenate position C-8 of linoleic acid to produce 8(R)-hydroperoxy-8(E),12(Z)-octadecadienoic acid (8R-HPODE). Moreover, the DOX domain can oxygenate alpha-linolenic acid (18:3n-3) at C-8 or C-10 to produce respectively 8HOTrE and 10HOTrE, oleic acid (18:1n-9) at C-8 or C-10 to produce respectively 8-H(P)OME and 10-H(P)OME (with 8R stereoisomer to over 95%), eicosadienoic acid (20:2n-6) at C-10 or C-12 to produce respectively 10(11)-epoxy-12-hydroxy-14(Z)-eicosenoic acid and 14(15)-epoxy-12-hydroxy-10(E)-eicosenoic acid, as well as eicosatrienoic acid (20:3n-3) at C-10 or C-12 to produce respectively 10(11)-epoxy-12-hydroxy-14(Z),17(Z)-eicosadienoic acid and 14(15)-epoxy-12-hydroxy-14(Z),17(Z)-eicosadienoic acid. On the other side, the enzyme EAS domain can also catalyze the conversion of 10HOTrE into 12(13)-epoxy-10(R)-hydroxy-8(E),15(Z)-octadecadienoic acid, 13-R-HPODE into the stereoisomers of 12(13)-epoxy-11-hydroxy-9(Z)-octadecenoic acids (erythro/threo, 1:4), as well as 13S-HPODE into the stereoisomers of 12(13)-epoxy-11-hydroxy-9(Z)-octadecenoic acids (erythro/threo, 1:4) (EAS activity). Gamma-linolenic acid (18:3n-6) is not a substrate. This Pyricularia oryzae (strain 70-15 / ATCC MYA-4617 / FGSC 8958) (Rice blast fungus) protein is Bifunctional dioxygenase (DOX)-epoxy alcohol synthase (EAS).